The primary structure comprises 272 residues: Ribonuclease 3 (272 aa).

The interval 1-22 is disordered; the sequence is MSLQFLRSEASDGAGETSDASS. Residues 31–162 enclose the RNase III domain; that stretch reads TATHLARLTG…LVGAIYLDQG (132 aa). Glutamate 75 serves as a coordination point for Mg(2+). Residue aspartate 79 is part of the active site. Residues aspartate 148 and glutamate 151 each contribute to the Mg(2+) site. Residue glutamate 151 is part of the active site. Residues 189-258 enclose the DRBM domain; that stretch reads NYKSRLIEYT…AKEAMKRLES (70 aa).

It belongs to the ribonuclease III family. In terms of assembly, homodimer. Mg(2+) is required as a cofactor.

Its subcellular location is the cytoplasm. It catalyses the reaction Endonucleolytic cleavage to 5'-phosphomonoester.. Functionally, digests double-stranded RNA. Involved in the processing of primary rRNA transcript to yield the immediate precursors to the large and small rRNAs (23S and 16S). Processes some mRNAs, and tRNAs when they are encoded in the rRNA operon. Processes pre-crRNA and tracrRNA of type II CRISPR loci if present in the organism. This chain is Ribonuclease 3, found in Chlorobaculum tepidum (strain ATCC 49652 / DSM 12025 / NBRC 103806 / TLS) (Chlorobium tepidum).